Here is a 222-residue protein sequence, read N- to C-terminus: Superoxide dismutase [Cu-Zn], chloroplastic (222 aa).

The N-terminal 68 residues, 1–68, are a transit peptide targeting the chloroplast; sequence MAAHTILASA…AASKPLTIVA (68 aa). Cu cation contacts are provided by His-114, His-116, and His-131. A disulfide bond links Cys-125 and Cys-214. Positions 131, 139, 148, and 151 each coordinate Zn(2+). His-188 contributes to the Cu cation binding site.

The protein belongs to the Cu-Zn superoxide dismutase family. As to quaternary structure, homotetramer. It depends on Cu cation as a cofactor. Zn(2+) serves as cofactor.

It localises to the plastid. Its subcellular location is the chloroplast. It carries out the reaction 2 superoxide + 2 H(+) = H2O2 + O2. Destroys radicals which are normally produced within the cells and which are toxic to biological systems. This chain is Superoxide dismutase [Cu-Zn], chloroplastic (SODCP), found in Spinacia oleracea (Spinach).